Reading from the N-terminus, the 360-residue chain is Phosphoserine aminotransferase (360 aa).

Residue Arg42 participates in L-glutamate binding. Pyridoxal 5'-phosphate contacts are provided by Trp102, Thr152, Asp171, and Gln194. At Lys195 the chain carries N6-(pyridoxal phosphate)lysine. 237 to 238 contacts pyridoxal 5'-phosphate; that stretch reads NT.

The protein belongs to the class-V pyridoxal-phosphate-dependent aminotransferase family. SerC subfamily. Homodimer. The cofactor is pyridoxal 5'-phosphate.

Its subcellular location is the cytoplasm. The catalysed reaction is O-phospho-L-serine + 2-oxoglutarate = 3-phosphooxypyruvate + L-glutamate. It carries out the reaction 4-(phosphooxy)-L-threonine + 2-oxoglutarate = (R)-3-hydroxy-2-oxo-4-phosphooxybutanoate + L-glutamate. The protein operates within amino-acid biosynthesis; L-serine biosynthesis; L-serine from 3-phospho-D-glycerate: step 2/3. It functions in the pathway cofactor biosynthesis; pyridoxine 5'-phosphate biosynthesis; pyridoxine 5'-phosphate from D-erythrose 4-phosphate: step 3/5. Catalyzes the reversible conversion of 3-phosphohydroxypyruvate to phosphoserine and of 3-hydroxy-2-oxo-4-phosphonooxybutanoate to phosphohydroxythreonine. The protein is Phosphoserine aminotransferase of Coxiella burnetii (strain RSA 331 / Henzerling II).